Consider the following 214-residue polypeptide: Pyridoxine/pyridoxamine 5'-phosphate oxidase (214 aa).

Substrate contacts are provided by residues 9 to 12 (RKNY) and K67. FMN is bound by residues 62–67 (RMVLLK), 77–78 (YT), K84, and Q106. Substrate-binding residues include Y124, R128, and S132. FMN-binding positions include 141-142 (QS) and W186. 192–194 (RLH) contacts substrate. R196 serves as a coordination point for FMN.

It belongs to the pyridoxamine 5'-phosphate oxidase family. In terms of assembly, homodimer. Requires FMN as cofactor.

It carries out the reaction pyridoxamine 5'-phosphate + O2 + H2O = pyridoxal 5'-phosphate + H2O2 + NH4(+). The enzyme catalyses pyridoxine 5'-phosphate + O2 = pyridoxal 5'-phosphate + H2O2. The protein operates within cofactor metabolism; pyridoxal 5'-phosphate salvage; pyridoxal 5'-phosphate from pyridoxamine 5'-phosphate: step 1/1. It participates in cofactor metabolism; pyridoxal 5'-phosphate salvage; pyridoxal 5'-phosphate from pyridoxine 5'-phosphate: step 1/1. Its function is as follows. Catalyzes the oxidation of either pyridoxine 5'-phosphate (PNP) or pyridoxamine 5'-phosphate (PMP) into pyridoxal 5'-phosphate (PLP). The protein is Pyridoxine/pyridoxamine 5'-phosphate oxidase of Gloeothece citriformis (strain PCC 7424) (Cyanothece sp. (strain PCC 7424)).